A 440-amino-acid chain; its full sequence is Probable exopolygalacturonase C (440 aa).

A signal peptide spans 1-21 (MLITNPALLGILASLAPLALG). Residues Asn24, Asn84, Asn151, and Asn219 are each glycosylated (N-linked (GlcNAc...) asparagine). 2 PbH1 repeats span residues 217-238 (GTNISITDSVMYNGDDAIAVNT) and 240-261 (SHNIVFARNTIGYQSHGMSIGS). Asp231 (proton donor) is an active-site residue. The active site involves His255. The N-linked (GlcNAc...) asparagine glycan is linked to Asn271. A PbH1 3 repeat occupies 272-293 (ITNLRFEDVTVIDALYAARFKS). 2 N-linked (GlcNAc...) asparagine glycosylation sites follow: Asn313 and Asn350. Cysteines 389 and 395 form a disulfide. Asn434 carries N-linked (GlcNAc...) asparagine glycosylation.

Belongs to the glycosyl hydrolase 28 family.

Its subcellular location is the secreted. The catalysed reaction is [(1-&gt;4)-alpha-D-galacturonosyl](n) + H2O = alpha-D-galacturonate + [(1-&gt;4)-alpha-D-galacturonosyl](n-1). Specific in hydrolyzing the terminal glycosidic bond of polygalacturonic acid and oligogalacturonates. This chain is Probable exopolygalacturonase C (pgxC), found in Neosartorya fischeri (strain ATCC 1020 / DSM 3700 / CBS 544.65 / FGSC A1164 / JCM 1740 / NRRL 181 / WB 181) (Aspergillus fischerianus).